Consider the following 160-residue polypeptide: Large ribosomal subunit protein uL22c (160 aa).

This sequence belongs to the universal ribosomal protein uL22 family. Part of the 50S ribosomal subunit.

Its subcellular location is the plastid. The protein resides in the chloroplast. Functionally, this protein binds specifically to 23S rRNA. The globular domain of the protein is located near the polypeptide exit tunnel on the outside of the subunit, while an extended beta-hairpin is found that lines the wall of the exit tunnel in the center of the 70S ribosome. The protein is Large ribosomal subunit protein uL22c (rpl22) of Draba nemorosa (Woodland whitlowgrass).